The primary structure comprises 786 residues: Endonuclease MutS2 (786 aa).

Residue 335–342 participates in ATP binding; sequence GPNTGGKT. The tract at residues 529–549 is disordered; that stretch reads SQKNAERERKEAEEHRKQSEK. Positions 711-786 constitute a Smr domain; the sequence is LDLRGERYED…GLGVTVVELK (76 aa).

Belongs to the DNA mismatch repair MutS family. MutS2 subfamily. In terms of assembly, homodimer. Binds to stalled ribosomes, contacting rRNA.

In terms of biological role, endonuclease that is involved in the suppression of homologous recombination and thus may have a key role in the control of bacterial genetic diversity. Functionally, acts as a ribosome collision sensor, splitting the ribosome into its 2 subunits. Detects stalled/collided 70S ribosomes which it binds and splits by an ATP-hydrolysis driven conformational change. Acts upstream of the ribosome quality control system (RQC), a ribosome-associated complex that mediates the extraction of incompletely synthesized nascent chains from stalled ribosomes and their subsequent degradation. Probably generates substrates for RQC. This chain is Endonuclease MutS2, found in Bacillus mycoides (strain KBAB4) (Bacillus weihenstephanensis).